Reading from the N-terminus, the 687-residue chain is Polyphosphate kinase (687 aa).

ATP is bound at residue Asn45. Mg(2+)-binding residues include Arg375 and Arg405. The active-site Phosphohistidine intermediate is His435. ATP-binding residues include Tyr472, Arg568, and His596.

It belongs to the polyphosphate kinase 1 (PPK1) family. Mg(2+) is required as a cofactor. Post-translationally, an intermediate of this reaction is the autophosphorylated ppk in which a phosphate is covalently linked to a histidine residue through a N-P bond.

It carries out the reaction [phosphate](n) + ATP = [phosphate](n+1) + ADP. Its function is as follows. Catalyzes the reversible transfer of the terminal phosphate of ATP to form a long-chain polyphosphate (polyP). The sequence is that of Polyphosphate kinase from Burkholderia cenocepacia (strain HI2424).